Consider the following 338-residue polypeptide: Deoxyhypusine hydroxylase (338 aa).

HEAT-like PBS-type repeat units follow at residues 71 to 97 (LKHE…VLKD), 104 to 130 (CRHE…LKDD), 200 to 233 (QRYR…GLKD), 238 to 264 (FRHE…CLSN), and 271 to 298 (VRHE…FLND). 4 residues coordinate Fe cation: His73, Glu74, His106, and Glu107. Positions 240, 241, 273, and 274 each coordinate Fe cation.

This sequence belongs to the deoxyhypusine hydroxylase family. The cofactor is Fe(2+).

Its subcellular location is the cytoplasm. It localises to the nucleus. It catalyses the reaction [eIF5A protein]-deoxyhypusine + AH2 + O2 = [eIF5A protein]-hypusine + A + H2O. The protein operates within protein modification; eIF5A hypusination. In terms of biological role, catalyzes the hydroxylation of the N(6)-(4-aminobutyl)-L-lysine intermediate to form hypusine, an essential post-translational modification only found in mature eIF-5A factor. The polypeptide is Deoxyhypusine hydroxylase (lia1) (Aspergillus niger (strain ATCC MYA-4892 / CBS 513.88 / FGSC A1513)).